Reading from the N-terminus, the 327-residue chain is Putative D-threonate 4-phosphate dehydrogenase (327 aa).

Substrate is bound by residues H139 and T140. Residues H169, H213, and H268 each coordinate a divalent metal cation. Substrate-binding residues include K276, N285, and R294.

Belongs to the PdxA family. PdxA2 subfamily. As to quaternary structure, homodimer. A divalent metal cation serves as cofactor.

It carries out the reaction 4-O-phospho-D-threonate + NAD(+) = dihydroxyacetone phosphate + CO2 + NADH. Its function is as follows. Catalyzes the NAD-dependent oxidation and subsequent decarboxylation of D-threonate 4-phosphate to produce dihydroxyacetone phosphate (DHAP). This is Putative D-threonate 4-phosphate dehydrogenase from Salmonella typhi.